A 205-amino-acid chain; its full sequence is Cbp/p300-interacting transactivator 3 (205 aa).

Belongs to the CITED family.

It localises to the nucleus. Acts as a transcriptional coactivator. Enhances estrogen-dependent transactivation mediated by estrogen receptors. The protein is Cbp/p300-interacting transactivator 3 (CITED3) of Gallus gallus (Chicken).